A 218-amino-acid chain; its full sequence is Structural protein V19 (218 aa).

The protein localises to the virion. The sequence is that of Structural protein V19 from Sputnik virophage.